Reading from the N-terminus, the 50-residue chain is Small ribosomal subunit protein eS31 (50 aa).

The Zn(2+) site is built by cysteine 22, cysteine 25, cysteine 40, and cysteine 43. Residues 22 to 43 form a C4-type zinc finger; it reads CPRCGPGVFMADHGDRWACGKC.

This sequence belongs to the eukaryotic ribosomal protein eS31 family. As to quaternary structure, part of the 30S ribosomal subunit. Requires Zn(2+) as cofactor.

In Pyrococcus horikoshii (strain ATCC 700860 / DSM 12428 / JCM 9974 / NBRC 100139 / OT-3), this protein is Small ribosomal subunit protein eS31.